A 272-amino-acid polypeptide reads, in one-letter code: Energy-coupling factor transporter ATP-binding protein EcfA1 (272 aa).

The 236-residue stretch at 2–237 (IKVSDVCFSY…KNIIEKAKID (236 aa)) folds into the ABC transporter domain. 37–44 (GHNGSGKS) provides a ligand contact to ATP.

It belongs to the ABC transporter superfamily. Energy-coupling factor EcfA family. Forms a stable energy-coupling factor (ECF) transporter complex composed of 2 membrane-embedded substrate-binding proteins (S component), 2 ATP-binding proteins (A component) and 2 transmembrane proteins (T component).

The protein resides in the cell membrane. Functionally, ATP-binding (A) component of a common energy-coupling factor (ECF) ABC-transporter complex. Unlike classic ABC transporters this ECF transporter provides the energy necessary to transport a number of different substrates. The polypeptide is Energy-coupling factor transporter ATP-binding protein EcfA1 (Mesomycoplasma hyopneumoniae (strain 7448) (Mycoplasma hyopneumoniae)).